The sequence spans 529 residues: Bifunctional purine biosynthesis protein PurH (529 aa).

The MGS-like domain maps to 1 to 148; the sequence is MQQRRPIRRA…KNHKDVAIVV (148 aa).

Belongs to the PurH family.

The catalysed reaction is (6R)-10-formyltetrahydrofolate + 5-amino-1-(5-phospho-beta-D-ribosyl)imidazole-4-carboxamide = 5-formamido-1-(5-phospho-D-ribosyl)imidazole-4-carboxamide + (6S)-5,6,7,8-tetrahydrofolate. It catalyses the reaction IMP + H2O = 5-formamido-1-(5-phospho-D-ribosyl)imidazole-4-carboxamide. It participates in purine metabolism; IMP biosynthesis via de novo pathway; 5-formamido-1-(5-phospho-D-ribosyl)imidazole-4-carboxamide from 5-amino-1-(5-phospho-D-ribosyl)imidazole-4-carboxamide (10-formyl THF route): step 1/1. Its pathway is purine metabolism; IMP biosynthesis via de novo pathway; IMP from 5-formamido-1-(5-phospho-D-ribosyl)imidazole-4-carboxamide: step 1/1. In Pectobacterium carotovorum subsp. carotovorum (strain PC1), this protein is Bifunctional purine biosynthesis protein PurH.